The sequence spans 463 residues: Ataxin-10 homolog (463 aa).

This sequence belongs to the ataxin-10 family.

It is found in the cytoplasm. Functionally, may play a role in the regulation of cytokinesis. In Candida albicans (strain SC5314 / ATCC MYA-2876) (Yeast), this protein is Ataxin-10 homolog (CTR86).